Reading from the N-terminus, the 504-residue chain is E3 ubiquitin-protein ligase dbl4 (504 aa).

The TRIAD supradomain stretch occupies residues 127-338; sequence HEGTCEICYD…NNWYTCNRYE (212 aa). 18 residues coordinate Zn(2+): cysteine 131, cysteine 134, cysteine 147, histidine 149, cysteine 152, cysteine 155, cysteine 173, cysteine 178, cysteine 217, cysteine 222, cysteine 244, cysteine 246, cysteine 251, cysteine 254, histidine 259, cysteine 264, cysteine 291, and cysteine 294. The segment at 131-178 adopts an RING-type 1 zinc-finger fold; sequence CEICYDEGCLPFFSAECDHEFCLACYRQYLDSRISEGESVIQCPEESC. The segment at 197–264 adopts an IBR-type zinc-finger fold; it reads DRYHRLLDRS…GHDNHQPTIC (68 aa). An RING-type 2; atypical zinc finger spans residues 291–320; the sequence is CPKCSTTIEKNGGCNHMTCKKCKYEFCWVC. The active site involves cysteine 304. Zn(2+)-binding residues include cysteine 309, cysteine 312, cysteine 317, cysteine 320, histidine 327, and cysteine 334.

The protein belongs to the RBR family.

Its subcellular location is the cytoplasm. It is found in the nucleus. The catalysed reaction is [E2 ubiquitin-conjugating enzyme]-S-ubiquitinyl-L-cysteine + [acceptor protein]-L-lysine = [E2 ubiquitin-conjugating enzyme]-L-cysteine + [acceptor protein]-N(6)-ubiquitinyl-L-lysine.. The protein operates within protein modification; protein ubiquitination. Functionally, probable ubiquitin-protein ligase involved in the degradation-related ubiquitination of histones. Contributes to the post-translational regulation of histone protein levels by polyubiquitination of excess histones for subsequent degradation. The polypeptide is E3 ubiquitin-protein ligase dbl4 (Schizosaccharomyces pombe (strain 972 / ATCC 24843) (Fission yeast)).